A 274-amino-acid polypeptide reads, in one-letter code: Urease accessory protein UreD (274 aa).

This sequence belongs to the UreD family. UreD, UreF and UreG form a complex that acts as a GTP-hydrolysis-dependent molecular chaperone, activating the urease apoprotein by helping to assemble the nickel containing metallocenter of UreC. The UreE protein probably delivers the nickel.

It localises to the cytoplasm. In terms of biological role, required for maturation of urease via the functional incorporation of the urease nickel metallocenter. The sequence is that of Urease accessory protein UreD from Klebsiella pneumoniae subsp. pneumoniae (strain ATCC 700721 / MGH 78578).